A 962-amino-acid chain; its full sequence is Glycine dehydrogenase (decarboxylating) (962 aa).

Lys709 carries the post-translational modification N6-(pyridoxal phosphate)lysine.

Belongs to the GcvP family. In terms of assembly, the glycine cleavage system is composed of four proteins: P, T, L and H. Pyridoxal 5'-phosphate is required as a cofactor.

The catalysed reaction is N(6)-[(R)-lipoyl]-L-lysyl-[glycine-cleavage complex H protein] + glycine + H(+) = N(6)-[(R)-S(8)-aminomethyldihydrolipoyl]-L-lysyl-[glycine-cleavage complex H protein] + CO2. In terms of biological role, the glycine cleavage system catalyzes the degradation of glycine. The P protein binds the alpha-amino group of glycine through its pyridoxal phosphate cofactor; CO(2) is released and the remaining methylamine moiety is then transferred to the lipoamide cofactor of the H protein. The protein is Glycine dehydrogenase (decarboxylating) of Shewanella oneidensis (strain ATCC 700550 / JCM 31522 / CIP 106686 / LMG 19005 / NCIMB 14063 / MR-1).